A 345-amino-acid polypeptide reads, in one-letter code: MKIAVDAMGGDNAPAVVVEGVERARDRFKDIEFDLFGDPQQVRPLIKDATRINLIETTEMIEMGEEPVRAIRKKKDSSIVRAAVAVKEGQADAFFSAGNTGAILAAGLFIVGRIKGIDRPGLTSILPIAKPGSGAKNFVYLDSGANAESKEKNLLQFAQLGRFYAENVLGVNNPRIALLNNGTEEDKGDRLHKEVHQQLKAQGDLNFVGNVEASALLAGEADVIVSDGWTANAALKATEGTAKMMLTLIKNGIENGGLRAKLGYLFLKPVFKKIAKLMGTSTYGGAVLLGLKAPVVKTHGSADALAVENTIAQIHTMIESKVIEKTVSYFGQVQSEENIDKPSKN.

It belongs to the PlsX family. Homodimer. Probably interacts with PlsY.

It is found in the cytoplasm. It carries out the reaction a fatty acyl-[ACP] + phosphate = an acyl phosphate + holo-[ACP]. It participates in lipid metabolism; phospholipid metabolism. Catalyzes the reversible formation of acyl-phosphate (acyl-PO(4)) from acyl-[acyl-carrier-protein] (acyl-ACP). This enzyme utilizes acyl-ACP as fatty acyl donor, but not acyl-CoA. This Limosilactobacillus fermentum (strain NBRC 3956 / LMG 18251) (Lactobacillus fermentum) protein is Phosphate acyltransferase.